The chain runs to 185 residues: MLQKTGRGLLAFLLIVLEWTQPSLPSPLRPICDLRVLNHFIKEAQDAEAAMKLCSEGCTLSDSVIVPQTTVEFDVWEKKSALAKAQEVQSGLWLLQEAFNFLRTSVTNTALHSHIDNSVRNLLSVNAVLRSLNIQEFTPPASAAEIEGTWRVSTATELLQVHINFLRGKVRLILLDAQACQQDVS.

The N-terminal stretch at 1–25 (MLQKTGRGLLAFLLIVLEWTQPSLP) is a signal peptide. Disulfide bonds link cysteine 32–cysteine 180 and cysteine 54–cysteine 58.

This sequence belongs to the EPO/TPO family. Expressed mainly in heart, liver and brain. Isoform 2 is brain specific.

It is found in the secreted. Its function is as follows. Erythropoietin is the principal hormone involved in the regulation of erythrocyte differentiation and the maintenance of a physiological level of circulating erythrocyte mass. The protein is Erythropoietin (epo) of Takifugu rubripes (Japanese pufferfish).